The following is a 149-amino-acid chain: Transcriptional repressor NrdR (149 aa).

A zinc finger lies at 3-34 (CPFCFAVDTKVIDSRLVGEGSSVRRRRQCLVC). Positions 49 to 139 (PRVIKSNDVR…VYRSFEDIKD (91 aa)) constitute an ATP-cone domain.

It belongs to the NrdR family. The cofactor is Zn(2+).

Its function is as follows. Negatively regulates transcription of bacterial ribonucleotide reductase nrd genes and operons by binding to NrdR-boxes. This Salmonella schwarzengrund (strain CVM19633) protein is Transcriptional repressor NrdR.